The sequence spans 437 residues: GTPase Obg (437 aa).

Positions Ser2–Leu160 constitute an Obg domain. The OBG-type G domain occupies Ala161–Ala338. Residues Gly167 to Ser174, Phe192 to Val196, Asp214 to Gly217, Asn284 to Asp287, and Ser319 to Leu321 contribute to the GTP site. Residues Ser174 and Thr194 each coordinate Mg(2+). An OCT domain is found at Gly359–Asp437.

It belongs to the TRAFAC class OBG-HflX-like GTPase superfamily. OBG GTPase family. In terms of assembly, monomer. It depends on Mg(2+) as a cofactor.

It is found in the cytoplasm. Functionally, an essential GTPase which binds GTP, GDP and possibly (p)ppGpp with moderate affinity, with high nucleotide exchange rates and a fairly low GTP hydrolysis rate. Plays a role in control of the cell cycle, stress response, ribosome biogenesis and in those bacteria that undergo differentiation, in morphogenesis control. In Streptococcus pyogenes serotype M4 (strain MGAS10750), this protein is GTPase Obg.